A 180-amino-acid polypeptide reads, in one-letter code: Inner membrane-spanning protein YciB (180 aa).

5 consecutive transmembrane segments (helical) span residues 25 to 45 (QNAT…CYII), 49 to 69 (VSKL…ITLI), 76 to 96 (IKIK…MSGI), 118 to 138 (IILS…NEVV), and 150 to 170 (FKVF…LPLL).

It belongs to the YciB family.

The protein resides in the cell inner membrane. Functionally, plays a role in cell envelope biogenesis, maintenance of cell envelope integrity and membrane homeostasis. The chain is Inner membrane-spanning protein YciB from Rickettsia prowazekii (strain Madrid E).